Reading from the N-terminus, the 202-residue chain is Transmembrane 4 L6 family member 4 (202 aa).

At 1–9 (MCTGGCARC) the chain is on the cytoplasmic side. A helical membrane pass occupies residues 10 to 30 (LGGTLIPLAVFGLLANILLFF). Over 31-48 (PGGKVVNDKSHLSDEVWY) the chain is Extracellular. A helical transmembrane segment spans residues 49 to 69 (FGGILGSGVLMIFPALVFLGL). The Cytoplasmic segment spans residues 70–93 (QNNDCCGCCGNEGCGKRFAMFTST). The helical transmembrane segment at 94–114 (LFAVIGFLGAGYSFIVSAVSI) threads the bilayer. The Extracellular portion of the chain corresponds to 115–158 (NKGPKCFMANGTWGYPFHDGDYLKDQALWSECEEPRDVVPWNLT). An N-linked (GlcNAc...) asparagine glycan is attached at Asn156. A helical membrane pass occupies residues 159 to 179 (LFSILLVIGGIQMVLCAIQVI). The Cytoplasmic portion of the chain corresponds to 180-202 (NGLLGTLCGDCQCCGCCGGDGPV).

Belongs to the L6 tetraspanin family.

It is found in the membrane. In terms of biological role, regulates the adhesive and proliferative status of intestinal epithelial cells. Can mediate density-dependent cell proliferation. The chain is Transmembrane 4 L6 family member 4 (Tm4sf4) from Mus musculus (Mouse).